A 495-amino-acid chain; its full sequence is Inner membrane ALBINO3-like protein 1, chloroplastic (495 aa).

A helical membrane pass occupies residues 76 to 96 (LGAIYVLADASASTAAAAVMP). At 97–206 (TAVDSAAGAA…VLYEQAGVNP (110 aa)) the chain is on the stromal side. The chain crosses the membrane as a helical span at residues 207-227 (LAGCLPTLATIPIFIGLFSSL). Topologically, residues 228-273 (TNVANDGLLDTQGFYFVPSLAGPTTMAMRQSGLGTSWLWPLGPDGA) are lumenal. The chain crosses the membrane as a helical span at residues 274–294 (PPIGWEDAAAYLTLPLLLVAV). Residues 295–317 (QYASSSVTSPPIDPKDENANTQR) are Stromal-facing. A helical membrane pass occupies residues 318–338 (ALLVFLPLMVGWFSLNVPAGL). At 339–441 (SLYYLANTVL…ASVSLSVDDS (103 aa)) the chain is on the lumenal side. The helical transmembrane segment at 442–462 (TAAIAGTATMAVTAGAPAAAM) threads the bilayer. The Stromal segment spans residues 463-495 (DPSKVNRRCKRRRLTSLVQDGSTASAAVAGASA).

The protein belongs to the OXA1/ALB3/YidC (TC 2.A.9.2) family. Associates with the LHCII complex and with the psaE subunit of the LHCI complex.

Its subcellular location is the plastid. It is found in the chloroplast thylakoid membrane. Required for the insertion of some light-harvesting complexes (LHC) proteins into the chloroplast thylakoid membrane. Essential for the assembly and activity of LHC I and II. Its function is probably partly distinct from that of ALB3.2. The protein is Inner membrane ALBINO3-like protein 1, chloroplastic (ALB3.1) of Chlamydomonas reinhardtii (Chlamydomonas smithii).